A 163-amino-acid polypeptide reads, in one-letter code: Large ribosomal subunit protein uL10 (163 aa).

The protein belongs to the universal ribosomal protein uL10 family. As to quaternary structure, part of the ribosomal stalk of the 50S ribosomal subunit. The N-terminus interacts with L11 and the large rRNA to form the base of the stalk. The C-terminus forms an elongated spine to which L12 dimers bind in a sequential fashion forming a multimeric L10(L12)X complex.

Its function is as follows. Forms part of the ribosomal stalk, playing a central role in the interaction of the ribosome with GTP-bound translation factors. The sequence is that of Large ribosomal subunit protein uL10 from Haemophilus influenzae (strain PittEE).